The sequence spans 519 residues: Membrane-bound glycerophospholipid O-acyltransferase 2 (519 aa).

Helical transmembrane passes span Pro-22–Phe-42, Thr-61–Val-81, Cys-88–Gly-108, Phe-184–Gly-204, Leu-236–Glu-256, and Tyr-288–Phe-305. Catalysis depends on residues Asn-341 and His-372. The next 3 helical transmembrane spans lie at Phe-365 to Gly-385, Ile-415 to Leu-435, and Phe-443 to Pro-463.

The protein belongs to the membrane-bound acyltransferase family.

The protein resides in the endoplasmic reticulum membrane. It carries out the reaction a 1-acyl-sn-glycero-3-phosphocholine + an acyl-CoA = a 1,2-diacyl-sn-glycero-3-phosphocholine + CoA. The enzyme catalyses a 1-acyl-sn-glycero-3-phosphoethanolamine + an acyl-CoA = a 1,2-diacyl-sn-glycero-3-phosphoethanolamine + CoA. The catalysed reaction is a 1-acyl-sn-glycero-3-phosphate + an acyl-CoA = a 1,2-diacyl-sn-glycero-3-phosphate + CoA. It catalyses the reaction (9Z)-hexadecenoyl-CoA + 1-hexadecanoyl-sn-glycero-3-phosphocholine = 1-hexadecanoyl-2-(9Z-hexadecenoyl)-sn-glycero-3-phosphocholine + CoA. It carries out the reaction 1-hexadecanoyl-sn-glycero-3-phosphoethanolamine + (9Z)-octadecenoyl-CoA = 1-hexadecanoyl-2-(9Z-octadecenoyl)-sn-glycero-3-phosphoethanolamine + CoA. The enzyme catalyses 1-hexadecanoyl-sn-glycero-3-phosphoethanolamine + (9Z)-hexadecenoyl-CoA = 1-hexadecanoyl-2-(9Z)-hexadecenoyl-sn-glycero-3-phosphoethanolamine + CoA. The catalysed reaction is 1-(9Z-octadecenoyl)-sn-glycero-3-phospho-L-serine + hexadecanoyl-CoA = 1-(9Z)-octadecenoyl-2-hexadecanoyl-sn-glycero-3-phosphoserine + CoA. It catalyses the reaction (9Z,12Z)-octadecadienoyl-CoA + 1-hexadecanoyl-sn-glycero-3-phosphocholine = 1-hexadecanoyl-2-(9Z,12Z-octadecadienoyl)-sn-glycero-3-phosphocholine + CoA. It carries out the reaction 1-hexadecanoyl-sn-glycero-3-phosphocholine + (9Z)-octadecenoyl-CoA = 1-hexadecanoyl-2-(9Z-octadecenoyl)-sn-glycero-3-phosphocholine + CoA. The enzyme catalyses 1-hexadecanoyl-sn-glycero-3-phosphate + (9Z)-hexadecenoyl-CoA = 1-hexadecanoyl-2-[(9Z)-hexadec-9-enoyl]-sn-glycero-3-phosphate + CoA. The catalysed reaction is 1-hexadecanoyl-sn-glycero-3-phosphate + (9Z)-octadecenoyl-CoA = 1-hexadecanoyl-2-(9Z-octadecenoyl)-sn-glycero-3-phosphate + CoA. It catalyses the reaction a 1-O-(1Z-alkenyl)-sn-glycero-3-phosphocholine + (9Z)-octadecenoyl-CoA = 1-O-(1Z)-alkenyl-2-(9Z)-octadecenoyl-sn-glycero-3-phosphocholine + CoA. It carries out the reaction a 1-O-(1Z-alkenyl)-sn-glycero-3-phosphoethanolamine + (9Z)-octadecenoyl-CoA = 1-O-(1Z)-alkenyl-2-(9Z)-octadecenoyl-sn-glycero-3-phosphoethanolamine + CoA. The enzyme catalyses 1-octadecanoyl-sn-glycero-3-phosphoethanolamine + (9Z)-octadecenoyl-CoA = 1-octadecanoyl-2-(9Z-octadecenoyl)-sn-glycero-3-phosphoethanolamine + CoA. The catalysed reaction is 1-octadecanoyl-sn-glycero-3-phosphocholine + (9Z)-octadecenoyl-CoA = 1-octadecanoyl-2-(9Z-octadecenoyl)-sn-glycero-3-phosphocholine + CoA. It catalyses the reaction 1-(9Z-octadecenoyl)-sn-glycero-3-phosphoethanolamine + (9Z)-octadecenoyl-CoA = 1,2-di-(9Z-octadecenoyl)-sn-glycero-3-phosphoethanolamine + CoA. Its pathway is lipid metabolism; phospholipid metabolism. Its activity is regulated as follows. Partially inhibited by thimerosal. In terms of biological role, acyltransferase which catalyzes the transfer of an acyl group from an acyl-CoA to a lysophospholipid leading to the production of a phospholipid and participates in the reacylation step of the phospholipid remodeling pathway also known as the Lands cycle. May catalyze preferentially the acylation of lysophosphatidylethanolamine (1-acyl-sn-glycero-3-phosphoethanolamine or LPE) and lysophosphatidic acid (LPA) and to a lesser extend lysophosphatidylcholine (LPC) and lysophosphatidylserine (LPS). Prefers oleoyl-CoA as the acyl donor. May be involved in chondrocyte differentiation. The sequence is that of Membrane-bound glycerophospholipid O-acyltransferase 2 from Rattus norvegicus (Rat).